The sequence spans 212 residues: ATP-dependent Clp protease proteolytic subunit (212 aa).

Catalysis depends on S114, which acts as the Nucleophile. Residue H139 is part of the active site.

This sequence belongs to the peptidase S14 family. Fourteen ClpP subunits assemble into 2 heptameric rings which stack back to back to give a disk-like structure with a central cavity, resembling the structure of eukaryotic proteasomes.

It is found in the cytoplasm. It carries out the reaction Hydrolysis of proteins to small peptides in the presence of ATP and magnesium. alpha-casein is the usual test substrate. In the absence of ATP, only oligopeptides shorter than five residues are hydrolyzed (such as succinyl-Leu-Tyr-|-NHMec, and Leu-Tyr-Leu-|-Tyr-Trp, in which cleavage of the -Tyr-|-Leu- and -Tyr-|-Trp bonds also occurs).. Functionally, cleaves peptides in various proteins in a process that requires ATP hydrolysis. Has a chymotrypsin-like activity. Plays a major role in the degradation of misfolded proteins. This chain is ATP-dependent Clp protease proteolytic subunit, found in Azoarcus sp. (strain BH72).